The following is a 337-amino-acid chain: GTP 3',8-cyclase (337 aa).

In terms of domain architecture, Radical SAM core spans 17-243; that stretch reads PFQRQYYYLR…HKSHTDGPAK (227 aa). Arg-26 provides a ligand contact to GTP. [4Fe-4S] cluster-binding residues include Cys-33 and Cys-37. Tyr-39 contributes to the S-adenosyl-L-methionine binding site. Residue Cys-40 coordinates [4Fe-4S] cluster. Residue Arg-76 coordinates GTP. Position 80 (Gly-80) interacts with S-adenosyl-L-methionine. Thr-107 lines the GTP pocket. Position 131 (Ser-131) interacts with S-adenosyl-L-methionine. Lys-168 is a GTP binding site. Residue Met-202 participates in S-adenosyl-L-methionine binding. The [4Fe-4S] cluster site is built by Cys-265 and Cys-268. 270–272 is a GTP binding site; sequence RLR. Cys-282 contributes to the [4Fe-4S] cluster binding site.

The protein belongs to the radical SAM superfamily. MoaA family. Monomer and homodimer. [4Fe-4S] cluster serves as cofactor.

The enzyme catalyses GTP + AH2 + S-adenosyl-L-methionine = (8S)-3',8-cyclo-7,8-dihydroguanosine 5'-triphosphate + 5'-deoxyadenosine + L-methionine + A + H(+). It participates in cofactor biosynthesis; molybdopterin biosynthesis. In terms of biological role, catalyzes the cyclization of GTP to (8S)-3',8-cyclo-7,8-dihydroguanosine 5'-triphosphate. This chain is GTP 3',8-cyclase, found in Haemophilus influenzae (strain PittGG).